We begin with the raw amino-acid sequence, 398 residues long: RNA exonuclease 3 (398 aa).

One can recognise an Exonuclease domain in the interval 239–385 (VLALDCEMGF…QDAIAAMDII (147 aa)).

It belongs to the REXO1/REXO3 family.

It is found in the cytoplasm. Its subcellular location is the nucleus. Its function is as follows. 3' to 5' exoribonuclease required for proper 3' end maturation of MRP RNA and of the U5L snRNA. The chain is RNA exonuclease 3 (REX3) from Candida glabrata (strain ATCC 2001 / BCRC 20586 / JCM 3761 / NBRC 0622 / NRRL Y-65 / CBS 138) (Yeast).